Here is a 199-residue protein sequence, read N- to C-terminus: Probable chemoreceptor glutamine deamidase CheD (199 aa).

It belongs to the CheD family.

It carries out the reaction L-glutaminyl-[protein] + H2O = L-glutamyl-[protein] + NH4(+). Functionally, probably deamidates glutamine residues to glutamate on methyl-accepting chemotaxis receptors (MCPs), playing an important role in chemotaxis. In Cereibacter sphaeroides (strain ATCC 17023 / DSM 158 / JCM 6121 / CCUG 31486 / LMG 2827 / NBRC 12203 / NCIMB 8253 / ATH 2.4.1.) (Rhodobacter sphaeroides), this protein is Probable chemoreceptor glutamine deamidase CheD.